The following is a 142-amino-acid chain: Baculoviral IAP repeat-containing protein 5 (142 aa).

The BIR repeat unit spans residues 18–88; the sequence is RVSTFKNWPF…KHSSGCAFLS (71 aa). Ser-20 is subject to Phosphoserine; by AURKC. An N6-acetyllysine modification is found at Lys-23. Residue Thr-34 is modified to Phosphothreonine; by CDK1 and CDK15. Thr-48 is modified (phosphothreonine). Positions 57, 60, 77, and 84 each coordinate Zn(2+). 4 positions are modified to N6-acetyllysine: Lys-90, Lys-110, Lys-112, and Lys-115. A Phosphothreonine; by AURKB modification is found at Thr-117. Lys-129 bears the N6-acetyllysine mark.

This sequence belongs to the IAP family. Monomer or homodimer. Exists as a homodimer in the apo state and as a monomer in the CPC-bound state. The monomer protects cells against apoptosis more efficiently than the dimer. Only the dimeric form is capable of enhancing tubulin stability in cells. When phosphorylated, interacts with LAMTOR5/HBXIP; the resulting complex binds pro-CASP9, as well as active CASP9, but much less efficiently. Component of the chromosomal passenger complex (CPC) composed of at least BIRC5/survivin, CDCA8/borealin, INCENP, AURKB or AURKC; in the complex forms a triple-helix bundle-based subcomplex with INCENP and CDCA8. Interacts with JTB. Interacts (via BIR domain) with histone H3 phosphorylated at 'Thr-3' (H3pT3). Interacts with EVI5. Interacts with GTP-bound RAN in both the S and M phases of the cell cycle. Interacts with USP9X. Interacts with tubulin. Interacts with BIRC2/c-IAP1. The acetylated form at Lys-129 interacts with STAT3. The monomeric form deacetylated at Lys-129 interacts with XPO1/CRM1. The monomeric form interacts with XIAP/BIRC4. Both the dimeric and monomeric form can interact with DIABLO/SMAC. Interacts with BIRC6/bruce. Interacts with FBXL7; this interaction facilitates the polyubiquitination and subsequent proteasomal degradation of BIRC5 by the SCF(FBXL7) E3 ubiquitin-protein ligase complex. Ubiquitinated by the Cul9-RING ubiquitin-protein ligase complex, leading to its degradation. Ubiquitination is required for centrosomal targeting. Deubiquitinated by USP35 or USP38; leading to stabilization. In terms of processing, acetylation at Lys-129 results in its homodimerization, while deacetylation promotes the formation of monomers which heterodimerize with XPO1/CRM1 which facilitates its nuclear export. The acetylated form represses STAT3 transactivation. The dynamic equilibrium between its acetylation and deacetylation at Lys-129 determines its interaction with XPO1/CRM1, its subsequent subcellular localization, and its ability to inhibit STAT3 transactivation. Post-translationally, in vitro phosphorylation at Thr-117 by AURKB prevents interaction with INCENP and localization to mitotic chromosomes. Phosphorylation at Thr-48 by CK2 is critical for its mitotic and anti-apoptotic activities. Phosphorylation at Thr-34 by CDK15 is critical for its anti-apoptotic activity. Phosphorylation at Ser-20 by AURKC is critical for regulation of proper chromosome alignment and segregation, and possibly cytokinesis.

It is found in the cytoplasm. Its subcellular location is the nucleus. The protein localises to the chromosome. The protein resides in the centromere. It localises to the cytoskeleton. It is found in the spindle. Its subcellular location is the kinetochore. The protein localises to the midbody. Functionally, multitasking protein that has dual roles in promoting cell proliferation and preventing apoptosis. Component of a chromosome passage protein complex (CPC) which is essential for chromosome alignment and segregation during mitosis and cytokinesis. Acts as an important regulator of the localization of this complex; directs CPC movement to different locations from the inner centromere during prometaphase to midbody during cytokinesis and participates in the organization of the center spindle by associating with polymerized microtubules. Involved in the recruitment of CPC to centromeres during early mitosis via association with histone H3 phosphorylated at 'Thr-3' (H3pT3) during mitosis. The complex with RAN plays a role in mitotic spindle formation by serving as a physical scaffold to help deliver the RAN effector molecule TPX2 to microtubules. May counteract a default induction of apoptosis in G2/M phase. The acetylated form represses STAT3 transactivation of target gene promoters. May play a role in neoplasia. Inhibitor of CASP3 and CASP7. Essential for the maintenance of mitochondrial integrity and function. This Bos taurus (Bovine) protein is Baculoviral IAP repeat-containing protein 5 (BIRC5).